The primary structure comprises 476 residues: F-box protein At5g07670 (476 aa).

The region spanning 59-111 (PDFTLLLPDLILIRVIQKIPNSQRKNLSLVCKRWFRLHGRLVRSFKVSDWEFL) is the F-box domain.

This is F-box protein At5g07670 from Arabidopsis thaliana (Mouse-ear cress).